Here is a 434-residue protein sequence, read N- to C-terminus: Trigger factor (434 aa).

A PPIase FKBP-type domain is found at 161–246; the sequence is GKRVSIDFVG…VNKVEARELP (86 aa).

Belongs to the FKBP-type PPIase family. Tig subfamily.

The protein localises to the cytoplasm. It catalyses the reaction [protein]-peptidylproline (omega=180) = [protein]-peptidylproline (omega=0). In terms of biological role, involved in protein export. Acts as a chaperone by maintaining the newly synthesized protein in an open conformation. Functions as a peptidyl-prolyl cis-trans isomerase. The protein is Trigger factor of Vibrio parahaemolyticus serotype O3:K6 (strain RIMD 2210633).